A 466-amino-acid chain; its full sequence is Siroheme synthase (466 aa).

Positions Met1–Leu203 are precorrin-2 dehydrogenase /sirohydrochlorin ferrochelatase. Residues Ser22–Ile23 and Lys43–Ser44 contribute to the NAD(+) site. Ser128 bears the Phosphoserine mark. The segment at Gly216–Lys466 is uroporphyrinogen-III C-methyltransferase. Position 225 (Pro225) interacts with S-adenosyl-L-methionine. Residue Asp248 is the Proton acceptor of the active site. Lys270 acts as the Proton donor in catalysis. S-adenosyl-L-methionine is bound by residues Gly301–Asp303, Ile306, Thr331–Ala332, Met383, and Gly412.

It in the N-terminal section; belongs to the precorrin-2 dehydrogenase / sirohydrochlorin ferrochelatase family. This sequence in the C-terminal section; belongs to the precorrin methyltransferase family.

It catalyses the reaction uroporphyrinogen III + 2 S-adenosyl-L-methionine = precorrin-2 + 2 S-adenosyl-L-homocysteine + H(+). The enzyme catalyses precorrin-2 + NAD(+) = sirohydrochlorin + NADH + 2 H(+). It carries out the reaction siroheme + 2 H(+) = sirohydrochlorin + Fe(2+). The protein operates within cofactor biosynthesis; adenosylcobalamin biosynthesis; precorrin-2 from uroporphyrinogen III: step 1/1. It participates in cofactor biosynthesis; adenosylcobalamin biosynthesis; sirohydrochlorin from precorrin-2: step 1/1. It functions in the pathway porphyrin-containing compound metabolism; siroheme biosynthesis; precorrin-2 from uroporphyrinogen III: step 1/1. Its pathway is porphyrin-containing compound metabolism; siroheme biosynthesis; siroheme from sirohydrochlorin: step 1/1. The protein operates within porphyrin-containing compound metabolism; siroheme biosynthesis; sirohydrochlorin from precorrin-2: step 1/1. Multifunctional enzyme that catalyzes the SAM-dependent methylations of uroporphyrinogen III at position C-2 and C-7 to form precorrin-2 via precorrin-1. Then it catalyzes the NAD-dependent ring dehydrogenation of precorrin-2 to yield sirohydrochlorin. Finally, it catalyzes the ferrochelation of sirohydrochlorin to yield siroheme. The protein is Siroheme synthase of Vesicomyosocius okutanii subsp. Calyptogena okutanii (strain HA).